The primary structure comprises 479 residues: Glutamate--tRNA ligase (479 aa).

A 'HIGH' region motif is present at residues 9–19 (PSPTGNLHIGT). The short motif at 243-247 (KLSKR) is the 'KMSKS' region element. Residue K246 coordinates ATP.

Belongs to the class-I aminoacyl-tRNA synthetase family. Glutamate--tRNA ligase type 1 subfamily. Monomer.

It localises to the cytoplasm. The enzyme catalyses tRNA(Glu) + L-glutamate + ATP = L-glutamyl-tRNA(Glu) + AMP + diphosphate. Catalyzes the attachment of glutamate to tRNA(Glu) in a two-step reaction: glutamate is first activated by ATP to form Glu-AMP and then transferred to the acceptor end of tRNA(Glu). The sequence is that of Glutamate--tRNA ligase from Synechococcus sp. (strain JA-2-3B'a(2-13)) (Cyanobacteria bacterium Yellowstone B-Prime).